A 633-amino-acid polypeptide reads, in one-letter code: Chaperone protein HtpG (633 aa).

An a; substrate-binding region spans residues 1 to 341; that stretch reads MSATSSKETL…SADLPLNVSR (341 aa). A b region spans residues 342–558; the sequence is EILQSSRDID…EGDMSANLER (217 aa). Residues 559–633 form a c region; the sequence is LLKAAGQAAP…LNGLLAMLPG (75 aa).

It belongs to the heat shock protein 90 family. Homodimer.

The protein resides in the cytoplasm. Its function is as follows. Molecular chaperone. Has ATPase activity. The chain is Chaperone protein HtpG from Thiobacillus denitrificans (strain ATCC 25259 / T1).